Consider the following 84-residue polypeptide: Omega-theraphotoxin-Pm1a (84 aa).

A signal peptide spans 1-21; the sequence is MKTSMLAVFVALPLAFVLTAA. The propeptide occupies 22–45; it reads TEERAHPNELVNSLVELVKLDAER. Cystine bridges form between C52/C66, C59/C71, and C65/C78.

The protein belongs to the neurotoxin 10 (Hwtx-1) family. 41 (Jztx-36) subfamily. Expressed by the venom gland.

It localises to the secreted. In terms of biological role, omega-conotoxins act at presynaptic membranes, they bind and block voltage-gated calcium channels (Cav). This toxin inhibits barium currents (IBa) mediated by L-type voltage-gated calcium channels Cav1.2/CACNA1C (IC(50)=825 nM) and Cav1.3/CACNA1C (IC(50)=2240 nM). This is Omega-theraphotoxin-Pm1a from Pelinobius muticus (King baboon spider).